A 424-amino-acid polypeptide reads, in one-letter code: Probable threonylcarbamoyladenosine tRNA methylthiotransferase (424 aa).

Residues 4 to 115 enclose the MTTase N-terminal domain; the sequence is IRVYIETFGC…APQAVRAASN (112 aa). [4Fe-4S] cluster contacts are provided by C13, C48, C79, C150, C154, and C157. A Radical SAM core domain is found at 136-365; the sequence is RSNPLIHIIP…EELKMRITEE (230 aa). The TRAM domain occupies 368–424; that stretch reads RRLVGSFQEILVVERGRKGGFIGRTGSYIPVVTETGEPGSFRRVRIRDATGTYLLAD.

The protein belongs to the methylthiotransferase family. CDKAL1 subfamily. [4Fe-4S] cluster serves as cofactor.

The catalysed reaction is N(6)-L-threonylcarbamoyladenosine(37) in tRNA + (sulfur carrier)-SH + AH2 + 2 S-adenosyl-L-methionine = 2-methylsulfanyl-N(6)-L-threonylcarbamoyladenosine(37) in tRNA + (sulfur carrier)-H + 5'-deoxyadenosine + L-methionine + A + S-adenosyl-L-homocysteine + 2 H(+). In terms of biological role, catalyzes the methylthiolation of N6-threonylcarbamoyladenosine (t(6)A), leading to the formation of 2-methylthio-N6-threonylcarbamoyladenosine (ms(2)t(6)A) at position 37 in tRNAs that read codons beginning with adenine. The protein is Probable threonylcarbamoyladenosine tRNA methylthiotransferase of Methanothermobacter thermautotrophicus (strain ATCC 29096 / DSM 1053 / JCM 10044 / NBRC 100330 / Delta H) (Methanobacterium thermoautotrophicum).